The primary structure comprises 201 residues: Ras-related protein Rab-9B (201 aa).

Residues Val-18, Gly-19, Lys-20, Ser-21, Ser-22, Asp-33, Ser-34, Ala-36, His-38, and Thr-39 each coordinate GTP. Ser-21 contacts Mg(2+). A Switch 1 motif is present at residues 31–42 (KFDSQAFHTIGV). Ser-34 bears the Phosphoserine mark. Mg(2+)-binding residues include Thr-39 and Asp-62. The Switch 2 signature appears at 64 to 78 (AGQERFKSLRTPFYR). GTP contacts are provided by Gly-65, Asn-124, Lys-125, Ala-155, and Lys-156. Residues Cys-200 and Cys-201 are each lipidated (S-geranylgeranyl cysteine).

It belongs to the small GTPase superfamily. Rab family. As to quaternary structure, interacts (GTP-bound form) with SGSM1; the GDP-bound form has much lower affinity for SGSM1. The GTP-bound form but not the GDP-bound form interacts with HPS4 and the BLOC-3 complex (heterodimer of HPS1 and HPS4) but does not interact with HPS1 alone. Interacts (GTP-bound form) with NDE1. It depends on Mg(2+) as a cofactor.

The protein resides in the cell membrane. Its subcellular location is the cytoplasmic vesicle. It is found in the phagosome membrane. The catalysed reaction is GTP + H2O = GDP + phosphate + H(+). With respect to regulation, regulated by guanine nucleotide exchange factors (GEFs) which promote the exchange of bound GDP for free GTP. Regulated by GTPase activating proteins (GAPs) which increase the GTP hydrolysis activity. Inhibited by GDP dissociation inhibitors (GDIs). Functionally, the small GTPases Rab are key regulators of intracellular membrane trafficking, from the formation of transport vesicles to their fusion with membranes. Rabs cycle between an inactive GDP-bound form and an active GTP-bound form that is able to recruit to membranes different sets of downstream effectors directly responsible for vesicle formation, movement, tethering and fusion. RAB9B is involved in the transport of proteins between the endosomes and the trans Golgi network. May use NDE1/NDEL1 as an effector to interact with the dynein motor complex in order to control retrograde trafficking of RAB9-associated late endosomes to the TGN. The protein is Ras-related protein Rab-9B (RAB9B) of Pongo abelii (Sumatran orangutan).